Reading from the N-terminus, the 598-residue chain is Probable translation initiation factor IF-2 (598 aa).

One can recognise a tr-type G domain in the interval L3–K225. A G1 region spans residues G12–T19. G12–T19 is a binding site for GTP. A G2 region spans residues G37–H41. The interval D76 to G79 is G3. Residues D76–H80 and N130–D133 each bind GTP. The segment at N130–D133 is G4. Positions S200–M202 are G5.

Belongs to the TRAFAC class translation factor GTPase superfamily. Classic translation factor GTPase family. IF-2 subfamily.

In terms of biological role, function in general translation initiation by promoting the binding of the formylmethionine-tRNA to ribosomes. Seems to function along with eIF-2. The polypeptide is Probable translation initiation factor IF-2 (Methanococcus maripaludis (strain C5 / ATCC BAA-1333)).